The sequence spans 389 residues: MATKRDYYEVLGLAKGASDDEIKKAYRKLSKKYHPDINKEADAEEKFKEVSEAYEVLSDPQKKAAYDQYGHAGTDPNYGGGAGGFGGFGGGGFSSSGFGGFEDIFDSFFGGGGGRSVDPNAPRQGADLQYTIQLKFEEAIFGVEKEIKYNREDTCATCGGNGAKPGTHPETCHKCHGSGTINVERQTPLGRMMSRQTCDVCHGTGKEIKEPCPTCHGTGHEKKAHTVKVNVPAGVEDGQQMRLANQGEAGTNGGPYGDLYVVFRVEDSDIFDRDGAEIYYDLPVSFVQAALGDEVTVPTVHGDVKLKIPAGTQTGTNFRLRGKGAPRLRGGGNGDQHVKVKLITPKNLNEEQKDALRAFAKAGGQNVTEQQEEGFFDKMKDAFGGKKKK.

The region spanning 6 to 70 is the J domain; it reads DYYEVLGLAK…QKKAAYDQYG (65 aa). The segment at 142 to 224 adopts a CR-type zinc-finger fold; sequence GVEKEIKYNR…CHGTGHEKKA (83 aa). Zn(2+) is bound by residues C155, C158, C172, C175, C198, C201, C212, and C215. CXXCXGXG motif repeat units follow at residues 155–162, 172–179, 198–205, and 212–219; these read CATCGGNG, CHKCHGSG, CDVCHGTG, and CPTCHGTG.

It belongs to the DnaJ family. In terms of assembly, homodimer. Zn(2+) serves as cofactor.

It localises to the cytoplasm. Functionally, participates actively in the response to hyperosmotic and heat shock by preventing the aggregation of stress-denatured proteins and by disaggregating proteins, also in an autonomous, DnaK-independent fashion. Unfolded proteins bind initially to DnaJ; upon interaction with the DnaJ-bound protein, DnaK hydrolyzes its bound ATP, resulting in the formation of a stable complex. GrpE releases ADP from DnaK; ATP binding to DnaK triggers the release of the substrate protein, thus completing the reaction cycle. Several rounds of ATP-dependent interactions between DnaJ, DnaK and GrpE are required for fully efficient folding. Also involved, together with DnaK and GrpE, in the DNA replication of plasmids through activation of initiation proteins. This chain is Chaperone protein DnaJ, found in Enterococcus faecalis (strain ATCC 700802 / V583).